A 188-amino-acid polypeptide reads, in one-letter code: uncharacterized protein (188 aa).

Ser14 carries the post-translational modification Phosphoserine. The tract at residues Arg165–His188 is disordered. Over residues Lys171–His188 the composition is skewed to basic residues.

Its subcellular location is the nucleus. The protein localises to the nucleolus. This is an uncharacterized protein from Schizosaccharomyces pombe (strain 972 / ATCC 24843) (Fission yeast).